A 577-amino-acid chain; its full sequence is Arginine--tRNA ligase (577 aa).

Residues 123–133 carry the 'HIGH' region motif; that stretch reads PNVAKEMHVGH.

This sequence belongs to the class-I aminoacyl-tRNA synthetase family. In terms of assembly, monomer.

The protein resides in the cytoplasm. It carries out the reaction tRNA(Arg) + L-arginine + ATP = L-arginyl-tRNA(Arg) + AMP + diphosphate. In Cronobacter sakazakii (strain ATCC BAA-894) (Enterobacter sakazakii), this protein is Arginine--tRNA ligase.